The primary structure comprises 397 residues: Lysophospholipid transporter LplT (397 aa).

The Periplasmic portion of the chain corresponds to 1–17; the sequence is MSESVHTNTSLWSKGMK. Residues 18–38 form a helical membrane-spanning segment; sequence AVIVAQFLSAFGDNALLFATL. Residues 39–52 are Cytoplasmic-facing; it reads ALLKAQFYPEWSQP. Residues 53 to 73 traverse the membrane as a helical segment; it reads ILQMVFVGAYILFAPFVGQVA. Topologically, residues 74–90 are periplasmic; sequence DSFAKGRVMMFANGLKL. A helical transmembrane segment spans residues 91–111; sequence LGAASICFGINPFLGYTLVGV. At 112–144 the chain is on the cytoplasmic side; that stretch reads GAAAYSPAKYGILGELTTGSKLVKANGLMEAST. A helical membrane pass occupies residues 145–165; the sequence is IAAILLGSVAGGVLADWHVLV. Ala166 is a topological domain (periplasmic). A helical transmembrane segment spans residues 167-187; sequence LAACALAYGGAVVANIYIPKL. The Cytoplasmic portion of the chain corresponds to 188–226; that stretch reads AAARPGQSWNLINMTRSFLNACTSLWRNGETRFSLVGTS. Residues 227–247 form a helical membrane-spanning segment; that stretch reads LFWGAGVTLRFLLVLWVPVAL. Residues 248-256 lie on the Periplasmic side of the membrane; sequence GITDNATPT. Residues 257-277 traverse the membrane as a helical segment; it reads YLNAMVAIGIVVGAGAAAKLV. Topologically, residues 278-280 are cytoplasmic; sequence TLE. Residues 281–301 traverse the membrane as a helical segment; sequence TVSRCMPAGILIGVVVLIFSL. Residues 302-304 lie on the Periplasmic side of the membrane; that stretch reads QHE. Residues 305-325 traverse the membrane as a helical segment; that stretch reads QLPAYALLMLIGVLGGFFVVP. The Cytoplasmic portion of the chain corresponds to 326 to 343; it reads LNALLQERGKKSVGAGNA. A helical transmembrane segment spans residues 344–364; sequence IAVQNLGENSAMLLMLGIYSL. Over 365 to 366 the chain is Periplasmic; sequence AV. Residues 367-387 traverse the membrane as a helical segment; sequence MVGIPVVPIGIGFGALFALAI. Residues 388–397 lie on the Cytoplasmic side of the membrane; it reads TALWIWQRRH.

The protein belongs to the major facilitator superfamily. LplT (TC 2.A.1.42) family.

It localises to the cell inner membrane. Catalyzes the facilitated diffusion of 2-acyl-glycero-3-phosphoethanolamine (2-acyl-GPE) into the cell. The protein is Lysophospholipid transporter LplT of Escherichia coli O157:H7 (strain EC4115 / EHEC).